A 1775-amino-acid chain; its full sequence is MRNSFPPSDGGRSATDRRQQSSHSSSTNRYNSRSAQSSPPLNHRPTWNQQHSQYPNSNFPPNYRRDRNPSSGYSPPVTRARPNFIVQLLHPAAANSDTKLCFSTKKQEIESLALLCEIPEESIHVPQFGCIAGSFSFRQWVDARSAVVALWDYRLQGKHEFVPELIPNVIVPSDMNELKDRLRDLFSSHILSLMENGEGVKKVRLEIEEKSRQVVSFSSKRGLKFEVFEKKKAIEAERDLVVNRLEEFNNAMKSILRYLIGQDGYEFDLDDEEEGDVAVFCLEGAYDWRRIHCLIRRECRRLEDGLPIYAYRRQILKKIHREQIMVLIGETGSGKSTQLVQFLADSGVAASESIVCTQPRKIAAMTLADRVREESSGCYEENTVSCTPTFSSTEEISSKVVYMTDNCLLQHYMKDRSLSGISCVIIDEAHERSLNTDLLLALLKKLLSRRIDLRLVIMSATADAKQLSQYFFSCGILLVNGRNFPVEIVYSPSDTEENSVVGGIASYVGDVVKMAVEIHKTEKEGTILAFLTSQAEVEWACERFITPSAIALPLHGKLSFEEQFRVFQNHPGRRKVIFATNIAETSLTIPGVKYVIDSGMVKESKYEPRTGMSILKVCRVSQSSARQRAGRAGRTEPGRCYRLYSKNDFDSMNLNQEPEIRRVHLGVALLRMLALGVNNIAEFNFVDAPVPEAIAMAVQNLVQLGAVVEKNGVHELTQEGHCLVKLGLEPKLGKLILGCFRHRMGKEGIVLAAVMANASSIFCRVGNFDDKMKADRLKVQFCNQNGDLFTLLSVYKEWASLPRERRNKWCWENSLNAKSMRRCEDTVKELEICIERELTLVSPSYWVWNPNEGTKHDKHLKMVILASLAENVAMYTGYNQLGYEVALTGQQVQLHPSCSLLAFGQKPSWVVFGELLSIVDQYLVCVTACDFEALYMLDPPPPFDVSQMDERRLRIKKVVGCSSTVLKRFCGKSNRSLLSIVSRARSLCSDERIGIQVDVDQNEIRLYAPPLDMEKVSALVNDALECEKKWMHNECLEKYLYHGRGQVPIALFGSGAQIKHLEVDQRFLTVDVLYYGDDVVDDRELLTFLEKKIDGSICSIYKFAANKQDCDEKEKWGRITFLTPESAMKATEIQKFYFKGSVLKLFPSLSTGGGIFKMPYFSSVTAKIRWPRRESSGRGCLKCPSGDIHRILGDISSLEIGTNYVHIQRDQQSNDSILISGLGDLSEAEVLDVLEFRTQRRDLNFFIFRKKYSVQCPSPTACEEELHKRIFARMSAKNPEPNCVQVQVFEPKEDNYFMRALIKFDGRLHFEAAKALQELNGEVLPGCLPWQKIKCEQLFQSSIICSASIYNTVKRQLNVLLARFERQKGGECCLEPTHNGAYRVKITAYATRPVAEMRRELEELLRGRPINHPGFTRRVLQHLMSRDGINLMRKIQQETETYILLDRHNLTVRICGTSEKIAKAEQELIQALMDYHESKQLEIHLRGPEIRPDLMKEVVKRFGPELQGIKEKVHGVDLKLNTRYHVIQVHGSKEMRQEVQKMVNELAREKSALGEKPDEIEVECPICLSEVDDGYSLEGCSHLFCKACLLEQFEASMRNFDAFPILCSHIDCGAPIVLADMRALLSQEKLDELFSASLSSFVTSSDGKFRFCSTPDCPSVYRVAGPQESGEPFICGACHSEICTRCHLEYHPLITCERYKKFKENPDLSLKDWAKGKNVKECPICKSTIEKTDGCNHMKCRCGKHICWTCLDVFTQEEPCYAHLRTIHGGIGLVE.

The transit peptide at 1-33 (MRNSFPPSDGGRSATDRRQQSSHSSSTNRYNSR) directs the protein to the chloroplast. The interval 1 to 77 (MRNSFPPSDG…NPSSGYSPPV (77 aa)) is disordered. Low complexity predominate over residues 21 to 34 (SSHSSSTNRYNSRS). Over residues 35 to 60 (AQSSPPLNHRPTWNQQHSQYPNSNFP) the composition is skewed to polar residues. In terms of domain architecture, Helicase ATP-binding spans 316-480 (LKKIHREQIM…FFSCGILLVN (165 aa)). 329-336 (GETGSGKS) contacts ATP. The DEAH box signature appears at 427–430 (DEAH). Residues 510–676 (DVVKMAVEIH…VALLRMLALG (167 aa)) form the Helicase C-terminal domain. Positions 1560-1767 (IEVECPICLS…EPCYAHLRTI (208 aa)) are TRIAD supradomain. Positions 1564, 1567, 1580, 1582, 1585, 1588, 1607, 1612, 1652, 1657, 1675, 1678, 1683, 1686, 1691, 1696, 1722, and 1725 each coordinate Zn(2+). An RING-type 1 zinc finger spans residues 1564–1612 (CPICLSEVDDGYSLEGCSHLFCKACLLEQFEASMRNFDAFPILCSHIDC). Residues 1631-1696 (DELFSASLSS…HLEYHPLITC (66 aa)) form an IBR-type zinc finger. The RING-type 2; atypical zinc finger occupies 1722-1750 (CPICKSTIEKTDGCNHMKCRCGKHICWTC). C1735 is an active-site residue. Residues C1740 and C1742 each contribute to the Zn(2+) site.

It belongs to the DEAD box helicase family. DEAH subfamily.

The protein localises to the plastid. It localises to the chloroplast. The catalysed reaction is ATP + H2O = ADP + phosphate + H(+). The chain is ATP-dependent RNA helicase DEAH12, chloroplastic from Arabidopsis thaliana (Mouse-ear cress).